The chain runs to 289 residues: ATP synthase mitochondrial F1 complex assembly factor 2 (289 aa).

The N-terminal 40 residues, 1 to 40, are a transit peptide targeting the mitochondrion; it reads MWRRCLRLRDVGRRLLNLPRSGLTASEGLGPKLPTPIRAY. An N6-succinyllysine modification is found at lysine 133.

It belongs to the ATP12 family. Interacts with ATP5F1B; involved in the assembly of the F1 component of the mitochondrial ATP synthase (ATPase). Interacts with FMC1.

It localises to the mitochondrion inner membrane. In terms of biological role, plays a role in the assembly of the F1 component of the mitochondrial ATP synthase (ATPase). This Bos taurus (Bovine) protein is ATP synthase mitochondrial F1 complex assembly factor 2 (ATPAF2).